The chain runs to 123 residues: Ribosome-binding factor A (123 aa).

Belongs to the RbfA family. As to quaternary structure, monomer. Binds 30S ribosomal subunits, but not 50S ribosomal subunits or 70S ribosomes.

The protein resides in the cytoplasm. One of several proteins that assist in the late maturation steps of the functional core of the 30S ribosomal subunit. Associates with free 30S ribosomal subunits (but not with 30S subunits that are part of 70S ribosomes or polysomes). Required for efficient processing of 16S rRNA. May interact with the 5'-terminal helix region of 16S rRNA. The protein is Ribosome-binding factor A of Cupriavidus metallidurans (strain ATCC 43123 / DSM 2839 / NBRC 102507 / CH34) (Ralstonia metallidurans).